The following is a 323-amino-acid chain: 1D-myo-inositol 2-acetamido-2-deoxy-alpha-D-glucopyranoside deacetylase 1 (323 aa).

Positions 30, 33, and 165 each coordinate Zn(2+).

The protein belongs to the MshB deacetylase family. Zn(2+) is required as a cofactor.

The catalysed reaction is 1D-myo-inositol 2-acetamido-2-deoxy-alpha-D-glucopyranoside + H2O = 1D-myo-inositol 2-amino-2-deoxy-alpha-D-glucopyranoside + acetate. Functionally, catalyzes the deacetylation of 1D-myo-inositol 2-acetamido-2-deoxy-alpha-D-glucopyranoside (GlcNAc-Ins) in the mycothiol biosynthesis pathway. The protein is 1D-myo-inositol 2-acetamido-2-deoxy-alpha-D-glucopyranoside deacetylase 1 of Catenulispora acidiphila (strain DSM 44928 / JCM 14897 / NBRC 102108 / NRRL B-24433 / ID139908).